The primary structure comprises 95 residues: Large ribosomal subunit protein eL31 (95 aa).

Belongs to the eukaryotic ribosomal protein eL31 family.

The sequence is that of Large ribosomal subunit protein eL31 (rpl31e) from Pyrococcus horikoshii (strain ATCC 700860 / DSM 12428 / JCM 9974 / NBRC 100139 / OT-3).